A 282-amino-acid chain; its full sequence is Putative 4-diphosphocytidyl-2-C-methyl-D-erythritol kinase (282 aa).

The active site involves K10. 94-104 (PICAGLGGGSS) is an ATP binding site. D136 is an active-site residue.

It belongs to the GHMP kinase family. IspE subfamily.

It carries out the reaction 4-CDP-2-C-methyl-D-erythritol + ATP = 4-CDP-2-C-methyl-D-erythritol 2-phosphate + ADP + H(+). Catalyzes the phosphorylation of the position 2 hydroxy group of 4-diphosphocytidyl-2C-methyl-D-erythritol. The sequence is that of Putative 4-diphosphocytidyl-2-C-methyl-D-erythritol kinase (ipk) from Streptococcus mutans serotype c (strain ATCC 700610 / UA159).